The following is a 234-amino-acid chain: Small ribosomal subunit protein eS4 (234 aa).

In terms of domain architecture, S4 RNA-binding spans Met39–Met102.

It belongs to the eukaryotic ribosomal protein eS4 family.

The chain is Small ribosomal subunit protein eS4 from Methanocella arvoryzae (strain DSM 22066 / NBRC 105507 / MRE50).